Here is an 80-residue protein sequence, read N- to C-terminus: Large ribosomal subunit protein bL28 (80 aa).

Residues 1-23 (MARVCQITGKKTRTGNNVSHANN) are disordered.

This sequence belongs to the bacterial ribosomal protein bL28 family.

This is Large ribosomal subunit protein bL28 from Cytophaga hutchinsonii (strain ATCC 33406 / DSM 1761 / CIP 103989 / NBRC 15051 / NCIMB 9469 / D465).